The following is a 152-amino-acid chain: Ribosome maturation factor RimP (152 aa).

It belongs to the RimP family.

Its subcellular location is the cytoplasm. Required for maturation of 30S ribosomal subunits. This chain is Ribosome maturation factor RimP, found in Paraburkholderia xenovorans (strain LB400).